Reading from the N-terminus, the 470-residue chain is Poly(A) polymerase catalytic subunit (470 aa).

Residues D192 and D194 contribute to the active site.

It belongs to the poxviridae poly(A) polymerase catalytic subunit family. As to quaternary structure, heterodimer of a large (catalytic) subunit and a small (regulatory) subunit.

It catalyses the reaction RNA(n) + ATP = RNA(n)-3'-adenine ribonucleotide + diphosphate. Functionally, polymerase that creates the 3'-poly(A) tail of mRNA's. The protein is Poly(A) polymerase catalytic subunit (PAPL) of Sus scrofa (Pig).